A 362-amino-acid chain; its full sequence is MRVTAPRTLLLLLSAALALTETWAGSHSMRYFDTAVSRPGRGEPRFITVGYVDDTQFVRFDSDAASPRMEPRAPWIEQEGPEYWDRETQTSKAQAQTDRENLRIALRYYNQSEAGSHTIQWMYGCDMGPDGRLLRGYSQSAYDGKDYIALNEDLSSWTAADTAAQITQRKWEAAREAEQLRAYLEGTCVEWLRRYLENGRETLQRADTPKTHVTHHPISDHEATLRCWALGFYPAEITLTWQRDGEDQTQDTELVETRPAGDGTFQKWAAVVVPSGEEERYTCHVQHEGLPKPLTLRWEPSSQSTIPIVGIVAGLAVLAVVVIGAVVTAVICRRKSSGGKGGSYSQAASSDSAQGSDVSLTA.

The signal sequence occupies residues Met-1–Ala-24. The tract at residues Gly-25–Ala-114 is alpha-1. The Extracellular segment spans residues Gly-25 to Ile-308. Residue Asn-110 is glycosylated (N-linked (GlcNAc...) asparagine). The tract at residues Gly-115–Ala-206 is alpha-2. 2 disulfide bridges follow: Cys-125–Cys-188 and Cys-227–Cys-283. Positions Asp-207 to Trp-298 are alpha-3. Residues Pro-209 to Thr-295 enclose the Ig-like C1-type domain. The interval Glu-299 to Ile-308 is connecting peptide. A helical transmembrane segment spans residues Val-309–Cys-332. The Cytoplasmic portion of the chain corresponds to Arg-333 to Ala-362. Residues Lys-335–Ala-362 are disordered. The span at Ser-343–Ala-362 shows a compositional bias: low complexity.

It belongs to the MHC class I family. In terms of assembly, heterodimer of an alpha chain and a beta chain (beta-2-microglobulin).

Its subcellular location is the membrane. Its function is as follows. Involved in the presentation of foreign antigens to the immune system. The polypeptide is Class I histocompatibility antigen, Gogo-B*0103 alpha chain (Gorilla gorilla gorilla (Western lowland gorilla)).